Here is a 330-residue protein sequence, read N- to C-terminus: MINFSSFYKDIADSNLQHWLETLPAILGKWQRDHKHGNLPKWEKVLNKLHYPQPDNIDFSSSVTIGTGEQLSPGQVEKLTNLLEVFQPWRKGPFSVHGIQIDTEWRSDWKWDRVKNFISPLKNRTVLDVGCGSGYHMWRMLGDGATRVVGIDPSPLFLCQFEAIKRVAGNQHPVYLLPLGIEELPPLDAFDTVFSMGVLYHRRSPIDHLLQLRDQLRVGGELVLETLVIDGDENAVLVPQDRYGKMNNVWFIPSVAALMLWLKKCEFIDIRCVDIDITSLAEQRSTHWMKNESLVDYLDPNDVSLTVEGYPAPKRAIIIATKNQPNHDLV.

Residues lysine 91, tryptophan 105, lysine 110, glycine 130, 152 to 154 (DPS), 181 to 182 (IE), methionine 196, tyrosine 200, and arginine 315 each bind carboxy-S-adenosyl-L-methionine.

Belongs to the class I-like SAM-binding methyltransferase superfamily. CmoB family. In terms of assembly, homotetramer.

It carries out the reaction carboxy-S-adenosyl-L-methionine + 5-hydroxyuridine(34) in tRNA = 5-carboxymethoxyuridine(34) in tRNA + S-adenosyl-L-homocysteine + H(+). In terms of biological role, catalyzes carboxymethyl transfer from carboxy-S-adenosyl-L-methionine (Cx-SAM) to 5-hydroxyuridine (ho5U) to form 5-carboxymethoxyuridine (cmo5U) at position 34 in tRNAs. The sequence is that of tRNA U34 carboxymethyltransferase from Shewanella frigidimarina (strain NCIMB 400).